The following is a 485-amino-acid chain: MATNPLSILFVASEVEGLIKSGGLADVAKALPEALVNLQHDARIAIPAYTAIPDVCDDEVILDTHLETWPHTHYQVKKRFLGDNPVYLIACGHYFDRPSMYAENNQAYTDNGERFAFFSAACLDMLPKIGFQPDIVHANDWHTGLVPFLLKHRYGQDPFFAQTKSILSIHNAVFKGVFHYDEMQCLPEFHCRNVPDAAVSSTHMTMLKAGVMNADKINAVSPTYAEELKTELGSHGMAWEFQQRAGDLVGILNGCDYSAWHPDTDSYLPINYKATKQSMVRGKNGCKRALQEQVGLPIKDVAMFGMVCRLTHQKGVHYLLPVLTEFLKLDVQLVLVGTGDPLLAAQLRDVAAQFGEKFVFVEAYNNQLAHLVEAASDFFLMPSEFEPCGLNQIYSMAYGSLPIVRGVGGLKDSVCDYDVNPETATGFVFYEPTAQALLITMQRALLLYAQNLTELRRVQLYAMERDFCWNKAAEQYVELYRSALK.

Lys20 contacts ADP-alpha-D-glucose.

It belongs to the glycosyltransferase 1 family. Bacterial/plant glycogen synthase subfamily.

It catalyses the reaction [(1-&gt;4)-alpha-D-glucosyl](n) + ADP-alpha-D-glucose = [(1-&gt;4)-alpha-D-glucosyl](n+1) + ADP + H(+). It participates in glycan biosynthesis; glycogen biosynthesis. Functionally, synthesizes alpha-1,4-glucan chains using ADP-glucose. In Vibrio vulnificus (strain CMCP6), this protein is Glycogen synthase.